The sequence spans 500 residues: Lysine--tRNA ligase (500 aa).

2 residues coordinate Mg(2+): E410 and E417.

Belongs to the class-II aminoacyl-tRNA synthetase family. Homodimer. The cofactor is Mg(2+).

The protein resides in the cytoplasm. It catalyses the reaction tRNA(Lys) + L-lysine + ATP = L-lysyl-tRNA(Lys) + AMP + diphosphate. The sequence is that of Lysine--tRNA ligase from Pseudomonas syringae pv. syringae (strain B728a).